We begin with the raw amino-acid sequence, 341 residues long: NADH-ubiquinone oxidoreductase chain 2 (341 aa).

The next 9 membrane-spanning stretches (helical) occupy residues 8 to 28, 60 to 80, 95 to 115, 121 to 141, 146 to 166, 195 to 215, 238 to 258, 273 to 293, and 321 to 341; these read ILFI…NSWL, YFLT…LLML, MIIM…FWFP, LTWM…LMLI, IKYL…IGGL, SIWL…TFMF, FTLF…GFLP, FMLT…LRIC, and MIMT…YFMF.

Belongs to the complex I subunit 2 family.

The protein resides in the mitochondrion inner membrane. The enzyme catalyses a ubiquinone + NADH + 5 H(+)(in) = a ubiquinol + NAD(+) + 4 H(+)(out). In terms of biological role, core subunit of the mitochondrial membrane respiratory chain NADH dehydrogenase (Complex I) that is believed to belong to the minimal assembly required for catalysis. Complex I functions in the transfer of electrons from NADH to the respiratory chain. The immediate electron acceptor for the enzyme is believed to be ubiquinone. The polypeptide is NADH-ubiquinone oxidoreductase chain 2 (mt:ND2) (Drosophila melanogaster (Fruit fly)).